The following is a 486-amino-acid chain: Cardiolipin synthase A (486 aa).

A run of 2 helical transmembrane segments spans residues 3-23 and 38-58; these read TFYT…IAGV and MAWL…YLSF. 2 consecutive PLD phosphodiesterase domains span residues 219–246 and 399–426; these read MDLR…VDPR and EDGL…DMRS. Active-site residues include His224, Lys226, Asp231, His404, Lys406, and Asp411.

Belongs to the phospholipase D family. Cardiolipin synthase subfamily. ClsA sub-subfamily.

Its subcellular location is the cell inner membrane. It carries out the reaction 2 a 1,2-diacyl-sn-glycero-3-phospho-(1'-sn-glycerol) = a cardiolipin + glycerol. Its function is as follows. Catalyzes the reversible phosphatidyl group transfer from one phosphatidylglycerol molecule to another to form cardiolipin (CL) (diphosphatidylglycerol) and glycerol. This Serratia proteamaculans (strain 568) protein is Cardiolipin synthase A.